Here is a 193-residue protein sequence, read N- to C-terminus: dTTP/UTP pyrophosphatase (193 aa).

Aspartate 71 serves as the catalytic Proton acceptor.

The protein belongs to the Maf family. YhdE subfamily. A divalent metal cation serves as cofactor.

It localises to the cytoplasm. The catalysed reaction is dTTP + H2O = dTMP + diphosphate + H(+). It carries out the reaction UTP + H2O = UMP + diphosphate + H(+). Functionally, nucleoside triphosphate pyrophosphatase that hydrolyzes dTTP and UTP. May have a dual role in cell division arrest and in preventing the incorporation of modified nucleotides into cellular nucleic acids. In Citrifermentans bemidjiense (strain ATCC BAA-1014 / DSM 16622 / JCM 12645 / Bem) (Geobacter bemidjiensis), this protein is dTTP/UTP pyrophosphatase.